Here is a 61-residue protein sequence, read N- to C-terminus: MDTKLLDILACPITKGPLKLSADKTELISKGAGLAYPIRDGIPVMLESEARTLTDEERLDK.

This sequence belongs to the UPF0434 family.

The protein is UPF0434 protein PSEEN1604 of Pseudomonas entomophila (strain L48).